The primary structure comprises 325 residues: Probable tRNA pseudouridine synthase B (325 aa).

The active-site Nucleophile is Asp-71. Residues Leu-238 to Met-313 form the PUA domain.

This sequence belongs to the pseudouridine synthase TruB family. Type 2 subfamily.

It catalyses the reaction uridine(55) in tRNA = pseudouridine(55) in tRNA. Its function is as follows. Could be responsible for synthesis of pseudouridine from uracil-55 in the psi GC loop of transfer RNAs. This is Probable tRNA pseudouridine synthase B from Korarchaeum cryptofilum (strain OPF8).